The following is a 96-amino-acid chain: UPF0251 protein VPA0321 (96 aa).

This sequence belongs to the UPF0251 family.

The sequence is that of UPF0251 protein VPA0321 from Vibrio parahaemolyticus serotype O3:K6 (strain RIMD 2210633).